We begin with the raw amino-acid sequence, 122 residues long: Large ribosomal subunit protein uL14 (122 aa).

The protein belongs to the universal ribosomal protein uL14 family. In terms of assembly, part of the 50S ribosomal subunit. Forms a cluster with proteins L3 and L19. In the 70S ribosome, L14 and L19 interact and together make contacts with the 16S rRNA in bridges B5 and B8.

Its function is as follows. Binds to 23S rRNA. Forms part of two intersubunit bridges in the 70S ribosome. In Streptomyces coelicolor (strain ATCC BAA-471 / A3(2) / M145), this protein is Large ribosomal subunit protein uL14.